Consider the following 158-residue polypeptide: UPF0178 protein Rpal_2485 (158 aa).

Belongs to the UPF0178 family.

This is UPF0178 protein Rpal_2485 from Rhodopseudomonas palustris (strain TIE-1).